Consider the following 587-residue polypeptide: ATP-dependent lipid A-core flippase (587 aa).

Transmembrane regions (helical) follow at residues leucine 31–leucine 51, leucine 68–isoleucine 88, glycine 145–phenylalanine 165, tyrosine 166–isoleucine 186, and valine 259–isoleucine 279. In terms of domain architecture, ABC transmembrane type-1 spans isoleucine 32–serine 315. One can recognise an ABC transporter domain in the interval leucine 347 to methionine 583. ATP is bound at residue glycine 381–serine 388.

It belongs to the ABC transporter superfamily. Lipid exporter (TC 3.A.1.106) family. As to quaternary structure, homodimer.

It localises to the cell inner membrane. It catalyses the reaction ATP + H2O + lipid A-core oligosaccharideSide 1 = ADP + phosphate + lipid A-core oligosaccharideSide 2.. Involved in lipopolysaccharide (LPS) biosynthesis. Translocates lipid A-core from the inner to the outer leaflet of the inner membrane. Transmembrane domains (TMD) form a pore in the inner membrane and the ATP-binding domain (NBD) is responsible for energy generation. This Haemophilus influenzae (strain ATCC 51907 / DSM 11121 / KW20 / Rd) protein is ATP-dependent lipid A-core flippase.